Consider the following 305-residue polypeptide: MELIFLGTSAGVPTRSRNVTAILLHLQHPTQPGVWLFDCGEGTQHQMLNTAFHPGKLERIFISHLHGDHLFGLPGLLCSRSMAGNPHPLTVYGPQGVREFIATTLRLSGSWTDFPLQIEEVSAGDILDDGLRKVTAFRLEHPLECYGYRVVEHDKPGALNARALKAAGVTPGPLFQALKAGKTVTLADGRQINGADYLAPAVAGKSVAIFGDTAPCEAALALAQGVDVMVHETTLDASMEEKANSRGHSSTRQTATLAREAAVGRLIMTHISSRYDDKGCQRLLAECRAIFPATELAYDFSVFPV.

Zn(2+)-binding residues include histidine 64, histidine 66, aspartate 68, histidine 69, histidine 141, aspartate 212, and histidine 270. Residue aspartate 68 is the Proton acceptor of the active site.

It belongs to the RNase Z family. RNase BN subfamily. Homodimer. Zn(2+) serves as cofactor.

Functionally, zinc phosphodiesterase, which has both exoribonuclease and endoribonuclease activities. The chain is Ribonuclease BN from Salmonella gallinarum (strain 287/91 / NCTC 13346).